Here is a 453-residue protein sequence, read N- to C-terminus: Bestrophin homolog 5 (453 aa).

4 consecutive transmembrane segments (helical) span residues 78 to 98, 113 to 133, 275 to 295, and 314 to 334; these read ELIVWICAYSLVSVIYRFALT, DARMGYLPLNFVLGFFCNIII, IPLMYPQLVNMAVHTYFFLCI, and LYIPFMTIIEFIFYMGWLKVA.

Belongs to the anion channel-forming bestrophin (TC 1.A.46) family. Calcium-sensitive chloride channel subfamily. In terms of assembly, forms oligomers.

The protein resides in the cell membrane. In terms of biological role, forms chloride channels. In Caenorhabditis elegans, this protein is Bestrophin homolog 5 (best-5).